Consider the following 326-residue polypeptide: Glycine N(alpha)-acyltransferase (326 aa).

It belongs to the acetyltransferase family.

It carries out the reaction a (3R)-hydroxyacyl-[ACP] + glycine = a lyso-glycine lipid + holo-[ACP] + H(+). The catalysed reaction is (3R)-hydroxyhexadecanoyl-[ACP] + glycine = N-[(3R)-3-hydroxyhexadecanoyl]-glycine + holo-[ACP] + H(+). The protein operates within lipid metabolism. Is involved in the production of glycine lipids (GL), which are phosphorus-free membrane lipids. Catalyzes the first step of GL biosynthesis, i.e. the N-acylation of glycine via addition of a 3-hydroxy fatty acyl group, to form a range of monoacylated glycine (also named lyso-glycine lipids or lyso-GL). As an example, catalyzes the production of commendamide, an N-acylated (3-OH C16:0) derivative of glycine with hemolytic activity and the ability to solubilize cholesterol micelles; this compound can also activate NF-kB through the G-protein coupled receptor GPCR G2A/132. The sequence is that of Glycine N(alpha)-acyltransferase from Phocaeicola vulgatus (strain ATCC 8482 / DSM 1447 / JCM 5826 / CCUG 4940 / NBRC 14291 / NCTC 11154) (Bacteroides vulgatus).